Here is a 609-residue protein sequence, read N- to C-terminus: UvrABC system protein C (609 aa).

In terms of domain architecture, GIY-YIG spans 16-94 (SSAGVYRMYD…IKQYMPKYNV (79 aa)). The 36-residue stretch at 203-238 (KQVISELVAKMEEAAEQQAYEQAARFRDQIMALRRV) folds into the UVR domain.

The protein belongs to the UvrC family. In terms of assembly, interacts with UvrB in an incision complex.

It is found in the cytoplasm. Functionally, the UvrABC repair system catalyzes the recognition and processing of DNA lesions. UvrC both incises the 5' and 3' sides of the lesion. The N-terminal half is responsible for the 3' incision and the C-terminal half is responsible for the 5' incision. This is UvrABC system protein C from Shewanella sp. (strain MR-4).